Consider the following 105-residue polypeptide: Endogenous retrovirus group K member 104 Rec protein (105 aa).

Residues 1–43 (MNPSEMQRKAPPRRRRHCNRAPLTHKMNKMVTSEEEMKLPSTK) are disordered. Over residues 10–19 (APPRRRRHCN) the composition is skewed to basic residues. Positions 13–20 (RRRRHCNR) match the Nuclear localization signal motif. The Nuclear export signal motif lies at 50–59 (WAQLKKLTQL).

In terms of assembly, forms homodimers, homotrimers, and homotetramers via a C-terminal domain. Associates with XPO1 and with ZNF145.

The protein resides in the cytoplasm. It localises to the nucleus. It is found in the nucleolus. In terms of biological role, retroviral replication requires the nuclear export and translation of unspliced, singly-spliced and multiply-spliced derivatives of the initial genomic transcript. Rec interacts with a highly structured RNA element (RcRE) present in the viral 3'LTR and recruits the cellular nuclear export machinery. This permits export to the cytoplasm of unspliced genomic or incompletely spliced subgenomic viral transcripts. The chain is Endogenous retrovirus group K member 104 Rec protein (HERV-K104) from Homo sapiens (Human).